A 128-amino-acid chain; its full sequence is uncharacterized protein (128 aa).

2 consecutive transmembrane segments (helical) span residues 45 to 65 (GYFH…LFPF) and 95 to 115 (FMSH…LSCF).

The protein resides in the membrane. This is an uncharacterized protein from Saccharomyces cerevisiae (strain ATCC 204508 / S288c) (Baker's yeast).